The following is a 114-amino-acid chain: Beta-microseminoprotein (114 aa).

An N-terminal signal peptide occupies residues Met1–Ala20. Intrachain disulfides connect Cys22/Cys70, Cys38/Cys62, Cys57/Cys93, Cys60/Cys69, and Cys84/Cys107.

The protein belongs to the beta-microseminoprotein family. In terms of assembly, homodimer; Interacts with PI16.

Its subcellular location is the secreted. This is Beta-microseminoprotein (MSMB) from Papio anubis (Olive baboon).